A 947-amino-acid polypeptide reads, in one-letter code: Valine--tRNA ligase (947 aa).

Positions 45–55 match the 'HIGH' region motif; that stretch reads PNVTGSLHMGH. Positions 591 to 595 match the 'KMSKS' region motif; sequence KMSKS. Lys-594 contacts ATP. Residues 879–943 adopt a coiled-coil conformation; sequence DLAAEQARLE…ASLRTALTRV (65 aa).

It belongs to the class-I aminoacyl-tRNA synthetase family. ValS type 1 subfamily. In terms of assembly, monomer.

The protein resides in the cytoplasm. It catalyses the reaction tRNA(Val) + L-valine + ATP = L-valyl-tRNA(Val) + AMP + diphosphate. Its function is as follows. Catalyzes the attachment of valine to tRNA(Val). As ValRS can inadvertently accommodate and process structurally similar amino acids such as threonine, to avoid such errors, it has a 'posttransfer' editing activity that hydrolyzes mischarged Thr-tRNA(Val) in a tRNA-dependent manner. The sequence is that of Valine--tRNA ligase from Agrobacterium fabrum (strain C58 / ATCC 33970) (Agrobacterium tumefaciens (strain C58)).